The primary structure comprises 743 residues: 1,4-alpha-glucan branching enzyme GlgB 2 (743 aa).

A disordered region spans residues 1–23 (MSERQGGQEQRTEADGMTTEGIS). The active-site Nucleophile is Asp422. Residue Glu475 is the Proton donor of the active site.

The protein belongs to the glycosyl hydrolase 13 family. GlgB subfamily. Monomer.

The catalysed reaction is Transfers a segment of a (1-&gt;4)-alpha-D-glucan chain to a primary hydroxy group in a similar glucan chain.. Its pathway is glycan biosynthesis; glycogen biosynthesis. Its function is as follows. Catalyzes the formation of the alpha-1,6-glucosidic linkages in glycogen by scission of a 1,4-alpha-linked oligosaccharide from growing alpha-1,4-glucan chains and the subsequent attachment of the oligosaccharide to the alpha-1,6 position. The polypeptide is 1,4-alpha-glucan branching enzyme GlgB 2 (Xanthomonas euvesicatoria pv. vesicatoria (strain 85-10) (Xanthomonas campestris pv. vesicatoria)).